We begin with the raw amino-acid sequence, 798 residues long: Suppressor of spindle checkpoint defect 1 (798 aa).

Residues 339-359 (ESIQQSQVNVDDMCNRIANME) are a coiled coil.

This sequence belongs to the APC5 family. As to quaternary structure, the APC/C complex is probably composed of at least 12 subunits: apc-2, apc-10, apc-11, cdc-26, emb-1, emb-27, emb-30, mat-1, mat-2, mat-3, such-1 and gfi-3. As to expression, expressed in head neurons, vulval precursor cells and in mature sperm stored in the spermatheca.

The protein operates within protein modification; protein ubiquitination. Functionally, probable component of the anaphase promoting complex/cyclosome (APC/C), a cell cycle-regulated E3 ubiquitin ligase that controls progression through mitosis and the G1 phase of the cell cycle. The APC/C complex acts by mediating ubiquitination and subsequent degradation of target proteins. Required for the metaphase to anaphase transition in meiosis. Plays a role in the segregation of DNA and centrioles during meiosis in male germ cells. The polypeptide is Suppressor of spindle checkpoint defect 1 (Caenorhabditis elegans).